A 510-amino-acid polypeptide reads, in one-letter code: NAD(P)H-quinone oxidoreductase subunit 2 A, chloroplastic (510 aa).

12 helical membrane-spanning segments follow: residues 31 to 51 (FIFP…IDLT), 59 to 79 (WFYF…LFRW), 99 to 119 (IFQF…VEYI), 124 to 144 (MAIT…MFLC), 149 to 169 (LITI…LSGY), 183 to 203 (YLLM…WLYG), 229 to 249 (ISIA…PAPF), 295 to 315 (WHLL…LLAI), 323 to 343 (MLAY…IVGD), 354 to 374 (YMLF…LFGL), 395 to 415 (ALSL…AGFF), and 418 to 438 (LYLF…IGLL).

It belongs to the complex I subunit 2 family. In terms of assembly, NDH is composed of at least 16 different subunits, 5 of which are encoded in the nucleus.

It is found in the plastid. The protein localises to the chloroplast thylakoid membrane. The catalysed reaction is a plastoquinone + NADH + (n+1) H(+)(in) = a plastoquinol + NAD(+) + n H(+)(out). It carries out the reaction a plastoquinone + NADPH + (n+1) H(+)(in) = a plastoquinol + NADP(+) + n H(+)(out). In terms of biological role, NDH shuttles electrons from NAD(P)H:plastoquinone, via FMN and iron-sulfur (Fe-S) centers, to quinones in the photosynthetic chain and possibly in a chloroplast respiratory chain. The immediate electron acceptor for the enzyme in this species is believed to be plastoquinone. Couples the redox reaction to proton translocation, and thus conserves the redox energy in a proton gradient. The chain is NAD(P)H-quinone oxidoreductase subunit 2 A, chloroplastic from Oryza nivara (Indian wild rice).